The sequence spans 154 residues: MRLKLLWVGKTQESWVRTGIEEYAGRIRRYAPLEILEAREEKGAQAAAMRERECERLAKLIPKGGRLVLLDERGEAMTSPELASFLSKNRDQGTQDLVFAIGGAYGFTDAFRSQAFKSISLSRMTLTHQMVRVFLLEQIYRGFTIINGEPYHHE.

S-adenosyl-L-methionine is bound by residues leucine 70, glycine 102, and 121 to 126 (LSRMTL).

Belongs to the RNA methyltransferase RlmH family. As to quaternary structure, homodimer.

Its subcellular location is the cytoplasm. It catalyses the reaction pseudouridine(1915) in 23S rRNA + S-adenosyl-L-methionine = N(3)-methylpseudouridine(1915) in 23S rRNA + S-adenosyl-L-homocysteine + H(+). Specifically methylates the pseudouridine at position 1915 (m3Psi1915) in 23S rRNA. The protein is Ribosomal RNA large subunit methyltransferase H of Geobacter sp. (strain M21).